The sequence spans 164 residues: Nucleotide-binding protein Mfla_1706 (164 aa).

Belongs to the YajQ family.

In terms of biological role, nucleotide-binding protein. The polypeptide is Nucleotide-binding protein Mfla_1706 (Methylobacillus flagellatus (strain ATCC 51484 / DSM 6875 / VKM B-1610 / KT)).